Reading from the N-terminus, the 168-residue chain is GTP-dependent dephospho-CoA kinase (168 aa).

6 residues coordinate GTP: D49, V50, V51, D68, K70, and E120.

It belongs to the GTP-dependent DPCK family.

It catalyses the reaction 3'-dephospho-CoA + GTP = GDP + CoA + H(+). The protein operates within cofactor biosynthesis; coenzyme A biosynthesis. Its function is as follows. Catalyzes the GTP-dependent phosphorylation of the 3'-hydroxyl group of dephosphocoenzyme A to form coenzyme A (CoA). This is GTP-dependent dephospho-CoA kinase from Pyrobaculum neutrophilum (strain DSM 2338 / JCM 9278 / NBRC 100436 / V24Sta) (Thermoproteus neutrophilus).